Consider the following 356-residue polypeptide: sn-glycerol-3-phosphate import ATP-binding protein UgpC (356 aa).

The ABC transporter domain maps to Leu-4–Ile-235. Gly-37–Ser-44 contributes to the ATP binding site.

Belongs to the ABC transporter superfamily. sn-glycerol-3-phosphate importer (TC 3.A.1.1.3) family. In terms of assembly, the complex is composed of two ATP-binding proteins (UgpC), two transmembrane proteins (UgpA and UgpE) and a solute-binding protein (UgpB).

It localises to the cell inner membrane. It carries out the reaction sn-glycerol 3-phosphate(out) + ATP + H2O = sn-glycerol 3-phosphate(in) + ADP + phosphate + H(+). Its function is as follows. Part of the ABC transporter complex UgpBAEC involved in sn-glycerol-3-phosphate (G3P) import. Responsible for energy coupling to the transport system. This Salmonella typhimurium (strain LT2 / SGSC1412 / ATCC 700720) protein is sn-glycerol-3-phosphate import ATP-binding protein UgpC.